A 111-amino-acid chain; its full sequence is Nucleoid-associated protein Ppha_1174 (111 aa).

This sequence belongs to the YbaB/EbfC family. In terms of assembly, homodimer.

Its subcellular location is the cytoplasm. The protein resides in the nucleoid. In terms of biological role, binds to DNA and alters its conformation. May be involved in regulation of gene expression, nucleoid organization and DNA protection. This Pelodictyon phaeoclathratiforme (strain DSM 5477 / BU-1) protein is Nucleoid-associated protein Ppha_1174.